The following is a 20-amino-acid chain: 39 kDa major outer membrane protein (20 aa).

It localises to the cell outer membrane. The chain is 39 kDa major outer membrane protein from Aggregatibacter actinomycetemcomitans (Actinobacillus actinomycetemcomitans).